The sequence spans 307 residues: Elongation factor Ts (307 aa).

Residues 79–82 (TDFV) are involved in Mg(2+) ion dislocation from EF-Tu.

This sequence belongs to the EF-Ts family.

The protein resides in the cytoplasm. Functionally, associates with the EF-Tu.GDP complex and induces the exchange of GDP to GTP. It remains bound to the aminoacyl-tRNA.EF-Tu.GTP complex up to the GTP hydrolysis stage on the ribosome. This chain is Elongation factor Ts (tsf), found in Bartonella quintana (strain Toulouse) (Rochalimaea quintana).